The following is a 366-amino-acid chain: tRNA-specific 2-thiouridylase MnmA (366 aa).

Residues 6-13 (AMSGGVDS) and leucine 32 contribute to the ATP site. Residue cysteine 101 is the Nucleophile of the active site. A disulfide bond links cysteine 101 and cysteine 198. Residue glycine 125 participates in ATP binding. The tract at residues 148–150 (KDQ) is interaction with tRNA. The active-site Cysteine persulfide intermediate is the cysteine 198.

This sequence belongs to the MnmA/TRMU family.

The protein localises to the cytoplasm. It carries out the reaction S-sulfanyl-L-cysteinyl-[protein] + uridine(34) in tRNA + AH2 + ATP = 2-thiouridine(34) in tRNA + L-cysteinyl-[protein] + A + AMP + diphosphate + H(+). Functionally, catalyzes the 2-thiolation of uridine at the wobble position (U34) of tRNA, leading to the formation of s(2)U34. The chain is tRNA-specific 2-thiouridylase MnmA from Nocardioides sp. (strain ATCC BAA-499 / JS614).